The following is a 293-amino-acid chain: Undecaprenyl-diphosphatase (293 aa).

The next 5 helical transmembrane spans lie at 107-127 (WMII…KDLI), 134-154 (MWIT…AEKV), 207-227 (FSFL…LPDA), 243-263 (IGTL…MKFV), and 268-288 (FSWF…LLWL).

Belongs to the UppP family.

The protein resides in the cell membrane. It catalyses the reaction di-trans,octa-cis-undecaprenyl diphosphate + H2O = di-trans,octa-cis-undecaprenyl phosphate + phosphate + H(+). In terms of biological role, catalyzes the dephosphorylation of undecaprenyl diphosphate (UPP). Confers resistance to bacitracin. The chain is Undecaprenyl-diphosphatase from Corynebacterium efficiens (strain DSM 44549 / YS-314 / AJ 12310 / JCM 11189 / NBRC 100395).